Here is a 364-residue protein sequence, read N- to C-terminus: Aminomethyltransferase (364 aa).

The protein belongs to the GcvT family. In terms of assembly, the glycine cleavage system is composed of four proteins: P, T, L and H.

The catalysed reaction is N(6)-[(R)-S(8)-aminomethyldihydrolipoyl]-L-lysyl-[protein] + (6S)-5,6,7,8-tetrahydrofolate = N(6)-[(R)-dihydrolipoyl]-L-lysyl-[protein] + (6R)-5,10-methylene-5,6,7,8-tetrahydrofolate + NH4(+). The glycine cleavage system catalyzes the degradation of glycine. In Shewanella baltica (strain OS195), this protein is Aminomethyltransferase.